A 90-amino-acid polypeptide reads, in one-letter code: uncharacterized protein (90 aa).

Positions 1-20 are cleaved as a signal peptide; the sequence is MEKLFVLVFALTLLAFSSEA. The tract at residues 31 to 50 is disordered; it reads QLLRSRRQDRPSKPGFPDEP.

Its subcellular location is the secreted. This is an uncharacterized protein from Rattus norvegicus (Rat).